The sequence spans 100 residues: Guanine nucleotide-binding protein subunit gamma 2 (100 aa).

Met1 carries the N-acetylmethionine modification. The stretch at 19-55 (TRGKHRIQAELKRLEQEARFLEEELEQLEKMDNASAS) forms a coiled coil. The G protein gamma domain maps to 21–100 (GKHRIQAELK…EAKRCGCSIL (80 aa)). A regulates lipidation and cell membrane subcellular localization region spans residues 90-96 (KEAKRCG). Cys95 carries S-palmitoyl cysteine lipidation. Residue Cys97 is modified to Cysteine methyl ester. Cys97 carries S-farnesyl cysteine lipidation. Positions 98–100 (SIL) are cleaved as a propeptide — removed in mature form.

G proteins are composed of 3 units, alpha, beta and gamma. GPG1 interacts with the beta subunit GB1. The dimer GB1-GG2 interacts with NDL1, NDL2 and NDL3. Binds to NUDT7. As to expression, mostly expressed in roots (excluded from the stele), seedlings (especially at the hypocotyl/root junction), floral stems, floral buds, flowers and siliques, and, to a lower extent, in leaves (restricted to guard cells). Also present in hydathods.

It localises to the cell membrane. In terms of biological role, guanine nucleotide-binding proteins (G proteins) are involved as a modulator or transducer in various transmembrane signaling systems. The beta and gamma chains are required for the GTPase activity, for replacement of GDP by GTP, and for G protein-effector interaction. Involved in the abscisic acid (ABA) and ethylene signaling pathways. Regulates basipetal transport of auxin (IAA) in roots and hypocotyls, and thus modulates root architecture (e.g. lateral root formation). The heterotrimeric G-protein controls defense responses to necrotrophic and vascular fungi probably by modulating cell wall-related genes expression; involved in resistance to Plectosphaerella cucumerina. This Arabidopsis thaliana (Mouse-ear cress) protein is Guanine nucleotide-binding protein subunit gamma 2 (GG2).